A 546-amino-acid polypeptide reads, in one-letter code: MLSRSLNKVVTSIKSSSIIRMSSATAAATSAPTANAANALKASKAPKKGKLQVSLKTPKGTKDWADSDMVIREAIFSTLSGLFKKHGGVTIDTPVFELREILAGKYGEDSKLIYNLEDQGGELCSLRYDLTVPFARYVAMNNIQSIKRYHIAKVYRRDQPAMTKGRMREFYQCDFDVAGTFESMVPDSECLSILVEGLTSLGIKDFKIKLNHRKILDGIFQIAGVKDEDVRKISSAVDKLDKSPWEAVKKEMTEEKGQSEETADKIGEYVKLNGSLKEIHAVLSADANITSNEKAKQGLDDIATLMKYTEAFDIDSFISFDLSLARGLDYYTGLIYEVVTSASAPPENASELKKKAKSAEDASEFVGVGSIAAGGRYDNLVNMFSEASGKKSTQIPCVGISFGVERIFSLIKQRINSSTTIKPTATQVFVMAFGGGKDWTGYLPERMKVTKQLWDAGIEAEYVYKAKANPRKQFDAAEKAGCHIAVILGKEEYLEGKLRVKRLGQEFADDDGELVSAADIVPIVQEKLSQIHEDGLNEVTRLIKGL.

The transit peptide at 1 to 20 (MLSRSLNKVVTSIKSSSIIR) directs the protein to the mitochondrion. Residues 129-131 (DLT), Arg156, Gln172, Asp176, Arg326, and 330-331 (YY) each bind L-histidine.

The protein belongs to the class-II aminoacyl-tRNA synthetase family.

The protein localises to the cytoplasm. Its subcellular location is the mitochondrion. The enzyme catalyses tRNA(His) + L-histidine + ATP = L-histidyl-tRNA(His) + AMP + diphosphate + H(+). Catalyzes the aminoacylation of histidyl-tRNA in both the cytoplasm and the mitochondrion. This chain is Histidine--tRNA ligase, mitochondrial (HTS1), found in Saccharomyces cerevisiae (strain ATCC 204508 / S288c) (Baker's yeast).